The primary structure comprises 425 residues: UDP-N-acetylglucosamine 1-carboxyvinyltransferase (425 aa).

22-23 (KN) is a phosphoenolpyruvate binding site. Arg93 is a binding site for UDP-N-acetyl-alpha-D-glucosamine. Catalysis depends on Cys117, which acts as the Proton donor. Cys117 is modified (2-(S-cysteinyl)pyruvic acid O-phosphothioketal). UDP-N-acetyl-alpha-D-glucosamine is bound by residues 122 to 126 (RPVDL), 162 to 165 (KVSV), Asp307, and Ile329.

It belongs to the EPSP synthase family. MurA subfamily.

The protein localises to the cytoplasm. The catalysed reaction is phosphoenolpyruvate + UDP-N-acetyl-alpha-D-glucosamine = UDP-N-acetyl-3-O-(1-carboxyvinyl)-alpha-D-glucosamine + phosphate. It functions in the pathway cell wall biogenesis; peptidoglycan biosynthesis. Functionally, cell wall formation. Adds enolpyruvyl to UDP-N-acetylglucosamine. The sequence is that of UDP-N-acetylglucosamine 1-carboxyvinyltransferase from Pasteurella multocida (strain Pm70).